The following is a 289-amino-acid chain: MTTPTLDLAIITGLSGAGRSTAAKCLEDLGWFVVDNLPPALLSTMAELGHRSGGAVSRIGVVVDVRGRAFFSDLRAAIAALDARGMHPRMLFLEASDDALIRRFDHVRRPHPLQGDERVVDGIGRERALLAELRGEADLVLDTTDLNVHELRSKIDAAFGQPGANRLNATVVSFGYKYGLPLDADLVADCRFLPNPHWVEELRPYTGRDPQVRSYVLAQPGAQEFLDQYAALLRLVGEGYAREGKRYLTLAVGCTGGKHRSVAMAEQLGARLAADGVGVRVVHRDLGRE.

13 to 20 (GLSGAGRS) lines the ATP pocket. Position 64 to 67 (64 to 67 (DVRG)) interacts with GTP.

It belongs to the RapZ-like family.

Its function is as follows. Displays ATPase and GTPase activities. In Frankia alni (strain DSM 45986 / CECT 9034 / ACN14a), this protein is Nucleotide-binding protein FRAAL4592.